The sequence spans 270 residues: uncharacterized protein (270 aa).

An N-terminal signal peptide occupies residues 1 to 22; the sequence is MEYIKKIALYMSVLLLIIFIGG. The N-palmitoyl cysteine moiety is linked to residue Cys23. Cys23 carries the S-diacylglycerol cysteine lipid modification.

This sequence belongs to the staphylococcal tandem lipoprotein family.

It localises to the cell membrane. This is an uncharacterized protein from Staphylococcus aureus (strain N315).